The following is a 201-amino-acid chain: MMTLKVAIGPQNAFVLRQGIRREYVLVIVALCGIADGALIAAGVGGFAALIHAHPNMTLVARFGGAAFLIGYALLAARNAWRPSGLVPSESGPAALIGVVQMCLVVTFLNPHVYLDTVVLIGALANEESDLRWFFGAGAWAASVVWFAVLGFSAGRLQPFFATPAAWRILDALVAVTMIGVAVVVLVTSPSVPTANVALII.

A run of 5 helical transmembrane segments spans residues 25 to 45 (VLVIVALCGIADGALIAAGVG), 57 to 77 (MTLVARFGGAAFLIGYALLAA), 104 to 124 (LVVTFLNPHVYLDTVVLIGAL), 133 to 153 (WFFGAGAWAASVVWFAVLGFS), and 169 to 189 (ILDALVAVTMIGVAVVVLVTS).

The protein belongs to the LysE/ArgO transporter (TC 2.A.75) family.

It is found in the cell membrane. This Mycobacterium bovis (strain ATCC BAA-935 / AF2122/97) protein is Putative amino-acid transporter Mb0498.